The primary structure comprises 149 residues: Transcriptional regulator MraZ (149 aa).

SpoVT-AbrB domains are found at residues 7–54 (KYVN…GISH) and 83–126 (AVQL…QPQN).

It belongs to the MraZ family. Forms oligomers.

The protein localises to the cytoplasm. It localises to the nucleoid. The polypeptide is Transcriptional regulator MraZ (Rickettsia conorii (strain ATCC VR-613 / Malish 7)).